The following is a 156-amino-acid chain: MSRRGNIKRKPVPPDPIYNSCLLNMTIRRVMKSGKKSVAAGIVYDAMTMIKERTGEEPLEVFERAMKNLTPLVEVKARRVGGATYQVPMEVRPARGTTLALRWLIRYSRIRGGRSMASKLANEIMDAANETGAAMKKRDETHRMADANKAFAHYRY.

The protein belongs to the universal ribosomal protein uS7 family. In terms of assembly, part of the 30S ribosomal subunit. Contacts proteins S9 and S11.

Its function is as follows. One of the primary rRNA binding proteins, it binds directly to 16S rRNA where it nucleates assembly of the head domain of the 30S subunit. Is located at the subunit interface close to the decoding center, probably blocks exit of the E-site tRNA. This chain is Small ribosomal subunit protein uS7, found in Crocosphaera subtropica (strain ATCC 51142 / BH68) (Cyanothece sp. (strain ATCC 51142)).